Reading from the N-terminus, the 207-residue chain is Cytochrome c biogenesis ATP-binding export protein CcmA (207 aa).

One can recognise an ABC transporter domain in the interval 6–207 (LCAEGLECIR…RGDCRSLNLS (202 aa)). 38–45 (GANGAGKT) provides a ligand contact to ATP.

Belongs to the ABC transporter superfamily. CcmA exporter (TC 3.A.1.107) family. In terms of assembly, the complex is composed of two ATP-binding proteins (CcmA) and two transmembrane proteins (CcmB).

The protein localises to the cell inner membrane. It carries out the reaction heme b(in) + ATP + H2O = heme b(out) + ADP + phosphate + H(+). Functionally, part of the ABC transporter complex CcmAB involved in the biogenesis of c-type cytochromes; once thought to export heme, this seems not to be the case, but its exact role is uncertain. Responsible for energy coupling to the transport system. This chain is Cytochrome c biogenesis ATP-binding export protein CcmA, found in Methylococcus capsulatus (strain ATCC 33009 / NCIMB 11132 / Bath).